The chain runs to 152 residues: Aspartate 1-decarboxylase (152 aa).

Residue serine 24 is the Schiff-base intermediate with substrate; via pyruvic acid of the active site. The residue at position 24 (serine 24) is a Pyruvic acid (Ser). Threonine 56 contributes to the substrate binding site. Tyrosine 57 functions as the Proton donor in the catalytic mechanism. 72-74 (GAA) contributes to the substrate binding site.

Belongs to the PanD family. As to quaternary structure, heterooctamer of four alpha and four beta subunits. Pyruvate serves as cofactor. In terms of processing, is synthesized initially as an inactive proenzyme, which is activated by self-cleavage at a specific serine bond to produce a beta-subunit with a hydroxyl group at its C-terminus and an alpha-subunit with a pyruvoyl group at its N-terminus.

It is found in the cytoplasm. The catalysed reaction is L-aspartate + H(+) = beta-alanine + CO2. It participates in cofactor biosynthesis; (R)-pantothenate biosynthesis; beta-alanine from L-aspartate: step 1/1. Its function is as follows. Catalyzes the pyruvoyl-dependent decarboxylation of aspartate to produce beta-alanine. The chain is Aspartate 1-decarboxylase from Rhodospirillum centenum (strain ATCC 51521 / SW).